Here is a 296-residue protein sequence, read N- to C-terminus: Phosphatidylglycerol--prolipoprotein diacylglyceryl transferase (296 aa).

Residues 1 to 21 (MRHRRRPGGRSTAGGTPVSQL) form a disordered region. A run of 7 helical transmembrane segments spans residues 34-54 (GPLT…VAYI), 72-92 (ELCA…HVIT), 108-128 (FFIW…GLAI), 136-158 (GIRF…AIGR), 195-215 (FHPT…FLLW), 227-243 (LFTL…FWVE), and 258-278 (LNDV…IVLQ). Arg158 is a binding site for a 1,2-diacyl-sn-glycero-3-phospho-(1'-sn-glycerol).

The protein belongs to the Lgt family.

It is found in the cell membrane. The enzyme catalyses L-cysteinyl-[prolipoprotein] + a 1,2-diacyl-sn-glycero-3-phospho-(1'-sn-glycerol) = an S-1,2-diacyl-sn-glyceryl-L-cysteinyl-[prolipoprotein] + sn-glycerol 1-phosphate + H(+). It functions in the pathway protein modification; lipoprotein biosynthesis (diacylglyceryl transfer). Catalyzes the transfer of the diacylglyceryl group from phosphatidylglycerol to the sulfhydryl group of the N-terminal cysteine of a prolipoprotein, the first step in the formation of mature lipoproteins. This Cutibacterium acnes (strain DSM 16379 / KPA171202) (Propionibacterium acnes) protein is Phosphatidylglycerol--prolipoprotein diacylglyceryl transferase.